The chain runs to 178 residues: Lipid A deacylase PagL (178 aa).

An N-terminal signal peptide occupies residues 1-19 (MQFLKKNKPLFGIVTLALA). Catalysis depends on charge relay system residues histidine 154, serine 156, and aspartate 168.

The protein belongs to the PagL family. As to quaternary structure, homodimer.

It localises to the cell outer membrane. The enzyme catalyses a 3-(acyloxy)acyl derivative of bacterial toxin + H2O = a 3-hydroxyacyl derivative of bacterial toxin + a fatty acid + H(+). Has lipid A 3-O-deacylase activity. Hydrolyzes the ester bond at the 3 position of lipid A, a bioactive component of lipopolysaccharide (LPS), thereby releasing the primary fatty acyl moiety. This chain is Lipid A deacylase PagL, found in Bordetella bronchiseptica (strain ATCC BAA-588 / NCTC 13252 / RB50) (Alcaligenes bronchisepticus).